The sequence spans 349 residues: Probable myosin light chain kinase DDB_G0275057 (349 aa).

Residues 1-33 (MGCFNSKEAGAGRPKTTTQQQQQATPEPTVTTA) form a disordered region. A compositionally biased stretch (low complexity) spans 16–33 (TTTQQQQQATPEPTVTTA). The region spanning 56–313 (YVVGKELGRG…AKQCLDDLWL (258 aa)) is the Protein kinase domain. Residues 62–70 (LGRGAFSVV) and Lys85 each bind ATP. Residue Asp178 is the Proton acceptor of the active site.

This sequence belongs to the protein kinase superfamily. CAMK Ser/Thr protein kinase family. CaMK subfamily.

It catalyses the reaction L-seryl-[myosin light chain] + ATP = O-phospho-L-seryl-[myosin light chain] + ADP + H(+). The enzyme catalyses L-threonyl-[myosin light chain] + ATP = O-phospho-L-threonyl-[myosin light chain] + ADP + H(+). With respect to regulation, does not have a calmodulin-binding domain. May phosphorylate a specific serine in the N-terminus of a myosin light chain. This is Probable myosin light chain kinase DDB_G0275057 from Dictyostelium discoideum (Social amoeba).